We begin with the raw amino-acid sequence, 647 residues long: 1-deoxy-D-xylulose-5-phosphate synthase (647 aa).

Residues histidine 74 and glycine 115–serine 117 contribute to the thiamine diphosphate site. Aspartate 146 is a binding site for Mg(2+). Residues glycine 147–alanine 148, asparagine 175, tyrosine 286, and glutamate 367 contribute to the thiamine diphosphate site. Asparagine 175 contacts Mg(2+).

It belongs to the transketolase family. DXPS subfamily. In terms of assembly, homodimer. Mg(2+) serves as cofactor. It depends on thiamine diphosphate as a cofactor.

It carries out the reaction D-glyceraldehyde 3-phosphate + pyruvate + H(+) = 1-deoxy-D-xylulose 5-phosphate + CO2. It functions in the pathway metabolic intermediate biosynthesis; 1-deoxy-D-xylulose 5-phosphate biosynthesis; 1-deoxy-D-xylulose 5-phosphate from D-glyceraldehyde 3-phosphate and pyruvate: step 1/1. Its function is as follows. Catalyzes the acyloin condensation reaction between C atoms 2 and 3 of pyruvate and glyceraldehyde 3-phosphate to yield 1-deoxy-D-xylulose-5-phosphate (DXP). The chain is 1-deoxy-D-xylulose-5-phosphate synthase from Heliobacterium modesticaldum (strain ATCC 51547 / Ice1).